The following is a 359-amino-acid chain: 1-deoxy-D-xylulose 5-phosphate reductoisomerase (359 aa).

Positions 7, 8, 9, 10, 31, 32, 33, and 111 each coordinate NADPH. Lys-112 lines the 1-deoxy-D-xylulose 5-phosphate pocket. NADPH is bound at residue Glu-113. Asp-131 provides a ligand contact to Mn(2+). The 1-deoxy-D-xylulose 5-phosphate site is built by Ser-132, Glu-133, Ser-155, and His-178. Glu-133 provides a ligand contact to Mn(2+). Gly-184 serves as a coordination point for NADPH. Positions 191, 196, 197, and 200 each coordinate 1-deoxy-D-xylulose 5-phosphate. Glu-200 contacts Mn(2+).

It belongs to the DXR family. The cofactor is Mg(2+). Mn(2+) serves as cofactor.

The enzyme catalyses 2-C-methyl-D-erythritol 4-phosphate + NADP(+) = 1-deoxy-D-xylulose 5-phosphate + NADPH + H(+). The protein operates within isoprenoid biosynthesis; isopentenyl diphosphate biosynthesis via DXP pathway; isopentenyl diphosphate from 1-deoxy-D-xylulose 5-phosphate: step 1/6. In terms of biological role, catalyzes the NADPH-dependent rearrangement and reduction of 1-deoxy-D-xylulose-5-phosphate (DXP) to 2-C-methyl-D-erythritol 4-phosphate (MEP). This chain is 1-deoxy-D-xylulose 5-phosphate reductoisomerase, found in Campylobacter lari (strain RM2100 / D67 / ATCC BAA-1060).